Here is a 1382-residue protein sequence, read N- to C-terminus: DNA-directed RNA polymerase subunit beta (1382 aa).

The protein belongs to the RNA polymerase beta chain family. The RNAP catalytic core consists of 2 alpha, 1 beta, 1 beta' and 1 omega subunit. When a sigma factor is associated with the core the holoenzyme is formed, which can initiate transcription.

It catalyses the reaction RNA(n) + a ribonucleoside 5'-triphosphate = RNA(n+1) + diphosphate. In terms of biological role, DNA-dependent RNA polymerase catalyzes the transcription of DNA into RNA using the four ribonucleoside triphosphates as substrates. This is DNA-directed RNA polymerase subunit beta from Anaplasma marginale (strain Florida).